Here is an 861-residue protein sequence, read N- to C-terminus: Probable beta-glucosidase A (861 aa).

A signal peptide spans 1–19 (MKLGWIEVAALAAASVVSA). Residues asparagine 62, asparagine 212, and asparagine 253 are each glycosylated (N-linked (GlcNAc...) asparagine). Aspartate 281 is a catalytic residue. Asparagine 316, asparagine 323, asparagine 355, asparagine 443, asparagine 524, asparagine 543, asparagine 565, asparagine 669, asparagine 713, and asparagine 846 each carry an N-linked (GlcNAc...) asparagine glycan.

The protein belongs to the glycosyl hydrolase 3 family.

Its subcellular location is the secreted. The enzyme catalyses Hydrolysis of terminal, non-reducing beta-D-glucosyl residues with release of beta-D-glucose.. It functions in the pathway glycan metabolism; cellulose degradation. Functionally, beta-glucosidases are one of a number of cellulolytic enzymes involved in the degradation of cellulosic biomass. Catalyzes the last step releasing glucose from the inhibitory cellobiose. This is Probable beta-glucosidase A (bglA) from Aspergillus flavus (strain ATCC 200026 / FGSC A1120 / IAM 13836 / NRRL 3357 / JCM 12722 / SRRC 167).